A 159-amino-acid chain; its full sequence is IQ domain-containing protein J (159 aa).

The IQ domain occupies 47–67 (ESKVKIIQRAWREYLQRQEPL). The interval 63-88 (RQEPLGKRSPSPPSVSSEKLSSSVSM) is disordered. Over residues 76 to 87 (SVSSEKLSSSVS) the composition is skewed to low complexity.

This is IQ domain-containing protein J from Homo sapiens (Human).